Here is a 562-residue protein sequence, read N- to C-terminus: Scaffold protein FimL (562 aa).

As to quaternary structure, interacts with PilG and FimV.

It is found in the cytoplasm. In terms of biological role, regulates multiple virulence functions including type IV pilus (T4P)-mediated assembly and twitching motility as well as cAMP-dependent virulence gene expression. Regulates intracellular cyclic AMP (cAMP) levels through the activation of adenylate cyclase CyaB. Also functions as a scaffold linking FimV and PilG at the pole, where type IV pilus (T4P), the Chp chemosensory system and the CyaB adenylate cyclase interact. The protein is Scaffold protein FimL (fimL) of Pseudomonas aeruginosa (strain ATCC 15692 / DSM 22644 / CIP 104116 / JCM 14847 / LMG 12228 / 1C / PRS 101 / PAO1).